The primary structure comprises 185 residues: GTP-binding protein rhb1 (185 aa).

GTP is bound by residues Ser-16, Gly-18, Lys-19, Ser-20, Ser-21, Val-32, Tyr-35, Thr-38, Asn-119, Asp-122, and Ala-150. Ser-20 is a binding site for Mg(2+). Positions 35 to 43 (YYPTIENTF) match the Effector region motif. Position 38 (Thr-38) interacts with Mg(2+). The residue at position 182 (Cys-182) is a Cysteine methyl ester. The S-farnesyl cysteine moiety is linked to residue Cys-182. Residues 183–185 (VIA) constitute a propeptide, removed in mature form.

It belongs to the small GTPase superfamily. Rheb family.

The protein resides in the cell membrane. The catalysed reaction is GTP + H2O = GDP + phosphate + H(+). Functionally, binds GTP and exhibits intrinsic GTPase activity. Regulates entry into stationary phase when extracellular nitrogen levels are adequate for growth. The protein is GTP-binding protein rhb1 (rhb1) of Schizosaccharomyces pombe (strain 972 / ATCC 24843) (Fission yeast).